Consider the following 239-residue polypeptide: RING finger protein 151 (239 aa).

The RING-type zinc-finger motif lies at 20–58 (CSVCHGVLKRPTRLPCSHIFCKKCIFRWLARQNTCPCCR). The TRAF-type zinc-finger motif lies at 101–156 (EHQDSCPFELMACPNEGCTVQVLRGVLDEHRQHCQQNGQQRCPLGCGSTLAALEGE).

As to quaternary structure, interacts with DTNBP1. In terms of tissue distribution, expressed in testis. Expressed in round spermatids of the stages VII-VIII semniniferous tubules. Expressed in elongating spermatids of stages VIII-IX seminiferous tubules (at protein level).

It is found in the cytoplasm. It localises to the nucleus. Its function is as follows. May be involved in acrosome formation of spermatids. The chain is RING finger protein 151 (Rnf151) from Mus musculus (Mouse).